Here is a 175-residue protein sequence, read N- to C-terminus: ATP synthase subunit b (175 aa).

A helical transmembrane segment spans residues 18-38 (VTSWEPFVANLIAFILMVVIL).

The protein belongs to the ATPase B chain family. As to quaternary structure, F-type ATPases have 2 components, F(1) - the catalytic core - and F(0) - the membrane proton channel. F(1) has five subunits: alpha(3), beta(3), gamma(1), delta(1), epsilon(1). F(0) has three main subunits: a(1), b(2) and c(10-14). The alpha and beta chains form an alternating ring which encloses part of the gamma chain. F(1) is attached to F(0) by a central stalk formed by the gamma and epsilon chains, while a peripheral stalk is formed by the delta and b chains.

The protein localises to the cell inner membrane. In terms of biological role, f(1)F(0) ATP synthase produces ATP from ADP in the presence of a proton or sodium gradient. F-type ATPases consist of two structural domains, F(1) containing the extramembraneous catalytic core and F(0) containing the membrane proton channel, linked together by a central stalk and a peripheral stalk. During catalysis, ATP synthesis in the catalytic domain of F(1) is coupled via a rotary mechanism of the central stalk subunits to proton translocation. Component of the F(0) channel, it forms part of the peripheral stalk, linking F(1) to F(0). This chain is ATP synthase subunit b, found in Akkermansia muciniphila (strain ATCC BAA-835 / DSM 22959 / JCM 33894 / BCRC 81048 / CCUG 64013 / CIP 107961 / Muc).